Reading from the N-terminus, the 228-residue chain is Outer membrane protein assembly factor BamE (228 aa).

The N-terminal stretch at 1–29 (MNPILKGVYSPARLGVVALTLFGILGVTG) is a signal peptide. Residue cysteine 30 is the site of N-palmitoyl cysteine attachment. Residue cysteine 30 is the site of S-diacylglycerol cysteine attachment. A disordered region spans residues 197–228 (DFFGSSKKDPDPQSPQLGPGTLNDVPKPADSK).

It belongs to the BamE family. Part of the Bam complex.

It localises to the cell outer membrane. Its function is as follows. Part of the outer membrane protein assembly complex, which is involved in assembly and insertion of beta-barrel proteins into the outer membrane. This chain is Outer membrane protein assembly factor BamE, found in Polynucleobacter necessarius subsp. necessarius (strain STIR1).